A 199-amino-acid chain; its full sequence is Gene 66 protein (199 aa).

The sequence is that of Gene 66 protein (66) from Mycobacterium (Mycobacteriophage D29).